Reading from the N-terminus, the 288-residue chain is Stomatin (288 aa).

Residues 1-22 (MAEKRHTRDSEAQRLPDSFKDS) are disordered. Residues 1 to 25 (MAEKRHTRDSEAQRLPDSFKDSPSK) lie on the Cytoplasmic side of the membrane. A Phosphoserine; by PKA modification is found at Ser-10. Ser-18 bears the Phosphoserine mark. The stretch at 26–54 (GLGPCGWILVAFSFLFTVITFPISIWMCI) is an intramembrane region. A lipid anchor (S-palmitoyl cysteine) is attached at Cys-30. At 55–288 (KIIKEYERAI…IIGAKHSHLG (234 aa)) the chain is on the cytoplasmic side. Cys-87 carries S-palmitoyl cysteine; partial lipidation. A phosphoserine mark is found at Ser-161 and Ser-244. The required for homooligomerization stretch occupies residues 265 to 273 (STIVFPLPI). Residues 267-269 (IVF) are required for lipid raft association. An interaction with LANCL1 region spans residues 273–287 (IDMLQGIIGAKHSHL).

The protein belongs to the band 7/mec-2 family. As to quaternary structure, homodimer and higher order homooligomer. The homodimer is banana-shaped. Interacts with ASIC1, ASIC2 and ASIC3. Interacts with LANCL1. Interacts with SLC2A1. Interacts with SLC4A1; this interaction positively regulates SLC4A1 activity. Identified in large complexes with SLC40A1, SLC14A1, SLC29A1 and AQP1. Interacts with STOML1; may redistribute STOM from the plasma membrane to late endosomes. In terms of tissue distribution, detected in erythrocytes (at protein level). Widely expressed.

The protein localises to the cell membrane. The protein resides in the cytoplasm. It localises to the cytoskeleton. It is found in the membrane raft. Its subcellular location is the melanosome. The protein localises to the cytoplasmic vesicle. Functionally, regulates ion channel activity and transmembrane ion transport. Regulates ASIC2 and ASIC3 channel activity. The polypeptide is Stomatin (Homo sapiens (Human)).